A 210-amino-acid chain; its full sequence is Glutathione S-transferase P 2 (210 aa).

The region spanning 2–81 is the GST N-terminal domain; sequence PPYTIVYFPS…HLGRSLGLYG (80 aa). Residues Tyr8, Arg14, Trp39, Lys45, 52–53, and 65–66 each bind glutathione; these read QL and QS. Residues 83–204 enclose the GST C-terminal domain; sequence NQREAAQVDM…SSPEHVNRPI (122 aa).

It belongs to the GST superfamily. Pi family. In terms of assembly, homodimer. As to expression, selectively expressed in gall bladder, colon, heart, and skeletal muscle.

The catalysed reaction is RX + glutathione = an S-substituted glutathione + a halide anion + H(+). In terms of biological role, conjugation of reduced glutathione to a wide number of exogenous and endogenous hydrophobic electrophiles. Cannot metabolize 1-chloro-2,4-dinitrobenzene. The protein is Glutathione S-transferase P 2 (Gstp2) of Mus musculus (Mouse).